An 888-amino-acid chain; its full sequence is Kinesin-like protein KIF20A (888 aa).

At Ser2 the chain carries N-acetylserine. Ser7, Ser14, and Ser21 each carry phosphoserine. In terms of domain architecture, Kinesin motor spans 63-506; the sequence is KVKVYLRVRP…AKFSAIASQL (444 aa). An ATP-binding site is contributed by 159–166; it reads GVTNSGKT. Position 527 is a phosphoserine; by PLK1 (Ser527). Residue Ser531 is modified to Phosphoserine. Coiled-coil stretches lie at residues 559 to 587 and 630 to 760; these read KEELLQVVEAMKALLLKERQEKLRLEVQL and ESLT…ERAC. Residues Ser667, Ser683, and Ser823 each carry the phosphoserine modification. A globular region spans residues 761 to 888; the sequence is CHNTGAGKLR…LKSGPFGKKY (128 aa). Residues 823-863 form a disordered region; that stretch reads STKKRLGANQENQQPNQQPPGKKPFLRNLLPRTPTCQSSTD. Thr855 carries the post-translational modification Phosphothreonine. A phosphoserine mark is found at Ser865, Ser876, and Ser881.

Belongs to the TRAFAC class myosin-kinesin ATPase superfamily. Kinesin family. Post-translationally, phosphorylated by PLK1 at Ser-527 during mitosis, creating a docking site for PLK1 and recruiting PLK1 at central spindle.

It is found in the golgi apparatus. It localises to the cytoplasm. The protein resides in the cytoskeleton. The protein localises to the spindle. Its function is as follows. Mitotic kinesin required for chromosome passenger complex (CPC)-mediated cytokinesis. Following phosphorylation by PLK1, involved in recruitment of PLK1 to the central spindle. Interacts with guanosine triphosphate (GTP)-bound forms of RAB6A and RAB6B. May act as a motor required for the retrograde RAB6 regulated transport of Golgi membranes and associated vesicles along microtubules. Has a microtubule plus end-directed motility. The sequence is that of Kinesin-like protein KIF20A (KIF20A) from Bos taurus (Bovine).